Reading from the N-terminus, the 53-residue chain is MSILLKILFKLLLLILSITFVITDCLPRSCASFGCCSGNCATWCDQCDIKYSC.

A signal peptide spans 1 to 23 (MSILLKILFKLLLLILSITFVIT).

This is an uncharacterized protein from Acheta domesticus (House cricket).